The chain runs to 209 residues: Large ribosomal subunit protein uL3 (209 aa).

The disordered stretch occupies residues 133-153 (THGNSLSHRVPGSIGQNQTPG). Glutamine 150 carries the post-translational modification N5-methylglutamine.

This sequence belongs to the universal ribosomal protein uL3 family. Part of the 50S ribosomal subunit. Forms a cluster with proteins L14 and L19. In terms of processing, methylated by PrmB.

Its function is as follows. One of the primary rRNA binding proteins, it binds directly near the 3'-end of the 23S rRNA, where it nucleates assembly of the 50S subunit. In Serratia proteamaculans (strain 568), this protein is Large ribosomal subunit protein uL3.